The following is an 83-amino-acid chain: Cytochrome b559 subunit alpha (83 aa).

Residues 21–35 (VIHSITIPSLFIAGW) form a helical membrane-spanning segment. Heme is bound at residue His-23.

The protein belongs to the PsbE/PsbF family. As to quaternary structure, heterodimer of an alpha subunit and a beta subunit. PSII is composed of 1 copy each of membrane proteins PsbA, PsbB, PsbC, PsbD, PsbE, PsbF, PsbH, PsbI, PsbJ, PsbK, PsbL, PsbM, PsbT, PsbX, PsbY, PsbZ, Psb30/Ycf12, at least 3 peripheral proteins of the oxygen-evolving complex and a large number of cofactors. It forms dimeric complexes. Heme b is required as a cofactor.

Its subcellular location is the plastid. The protein localises to the chloroplast thylakoid membrane. Functionally, this b-type cytochrome is tightly associated with the reaction center of photosystem II (PSII). PSII is a light-driven water:plastoquinone oxidoreductase that uses light energy to abstract electrons from H(2)O, generating O(2) and a proton gradient subsequently used for ATP formation. It consists of a core antenna complex that captures photons, and an electron transfer chain that converts photonic excitation into a charge separation. The polypeptide is Cytochrome b559 subunit alpha (Chara vulgaris (Common stonewort)).